Here is a 619-residue protein sequence, read N- to C-terminus: MYNPVDAVLTKIITNYGIDSFTLRYAICLLGSFPLNAILKRIPEKRIGLKCCFIISMSMFYLFGVLNLVSGFRTLFISTMFTYLISRFYRSKFMPHLNFMFVMGHLAINHIHAQFLNEQTQTTVDITSSQMVLAMKLTSFAWSYYDGSCTSESDFKDLTEHQKSRAVRGHPPLLKFLAYAFFYSTLLTGPSFDYADFDSWLNCEMFRDLPESKKPMRRHHPGERRQIPKNGKLALWKVVQGLAWMILSTLGMKHFPVKYVLDKDGFPTRSFIFRIHYLFLLGFIHRFKYYAAWTISEGSCILCGLGYNGYDSKTQKIRWDRVRNIDIWTVETAQNTREMLEAWNMNTNKWLKYSVYLRVTKKGKKPGFRSTLFTFLTSAFWHGTRPGYYLTFATGALYQTCGKIYRRNFRPIFLREDGVTPLPSKKIYDLVGIYAIKLAFGYMVQPFIILDLKPSLMVWGSVYFYVHIIVAFSFFLFRGPYAKQVTEFFKSKQPKEIFIRKQKKLEKDISASSPNLGGILKAKIEHEKGKTAEEEEMNLGIPPIELEKWDNAKEDWEDFCKDYKEWRNKNGLEIEEENLSKAFERFKQEFSNAASGSGERVRKMSFSGYSPKPISKKEE.

Over 1–19 (MYNPVDAVLTKIITNYGID) the chain is Lumenal. The helical transmembrane segment at 20–39 (SFTLRYAICLLGSFPLNAIL) threads the bilayer. The Cytoplasmic portion of the chain corresponds to 40–51 (KRIPEKRIGLKC). The helical transmembrane segment at 52 to 72 (CFIISMSMFYLFGVLNLVSGF) threads the bilayer. Residues 73–92 (RTLFISTMFTYLISRFYRSK) lie on the Lumenal side of the membrane. The chain crosses the membrane as a helical span at residues 93-113 (FMPHLNFMFVMGHLAINHIHA). At 114-231 (QFLNEQTQTT…GERRQIPKNG (118 aa)) the chain is on the cytoplasmic side. D146 serves as the catalytic Nucleophile. Residues 232–252 (KLALWKVVQGLAWMILSTLGM) form a helical membrane-spanning segment. Over 253 to 274 (KHFPVKYVLDKDGFPTRSFIFR) the chain is Lumenal. Residues 275 to 295 (IHYLFLLGFIHRFKYYAAWTI) form a helical membrane-spanning segment. Over 296–429 (SEGSCILCGL…TPLPSKKIYD (134 aa)) the chain is Cytoplasmic. E297 serves as the catalytic Nucleophile. H382 is a catalytic residue. Residues 430 to 450 (LVGIYAIKLAFGYMVQPFIIL) traverse the membrane as a helical segment. Residues 451-456 (DLKPSL) lie on the Lumenal side of the membrane. A helical membrane pass occupies residues 457–477 (MVWGSVYFYVHIIVAFSFFLF). Residues 478–619 (RGPYAKQVTE…SPKPISKKEE (142 aa)) are Cytoplasmic-facing. S513 carries the post-translational modification Phosphoserine. Positions 545–593 (ELEKWDNAKEDWEDFCKDYKEWRNKNGLEIEEENLSKAFERFKQEFSNA) form a coiled coil. The interval 592–619 (NAASGSGERVRKMSFSGYSPKPISKKEE) is disordered. S605, S610, and S615 each carry phosphoserine.

It belongs to the membrane-bound acyltransferase family.

It localises to the endoplasmic reticulum membrane. The catalysed reaction is a 1-acyl-sn-glycero-3-phosphate + an acyl-CoA = a 1,2-diacyl-sn-glycero-3-phosphate + CoA. It catalyses the reaction a 1-acyl-sn-glycero-3-phosphocholine + an acyl-CoA = a 1,2-diacyl-sn-glycero-3-phosphocholine + CoA. It carries out the reaction 1-acyl-sn-glycero-3-phospho-(1'-sn-glycerol) + an acyl-CoA = a 1,2-diacyl-sn-glycero-3-phospho-(1'-sn-glycerol) + CoA. The enzyme catalyses a 1-acyl-sn-glycero-3-phospho-(1D-myo-inositol) + an acyl-CoA = a 1,2-diacyl-sn-glycero-3-phospho-(1D-myo-inositol) + CoA. The catalysed reaction is a 1-acyl-sn-glycero-3-phospho-L-serine + an acyl-CoA = a 1,2-diacyl-sn-glycero-3-phospho-L-serine + CoA. It catalyses the reaction a 1-acyl-sn-glycero-3-phosphoethanolamine + an acyl-CoA = a 1,2-diacyl-sn-glycero-3-phosphoethanolamine + CoA. It carries out the reaction 1-(9Z-octadecenoyl)-sn-glycero-3-phosphoethanolamine + (9Z)-octadecenoyl-CoA = 1,2-di-(9Z-octadecenoyl)-sn-glycero-3-phosphoethanolamine + CoA. The enzyme catalyses 1-(9Z-octadecenoyl)-sn-glycero-3-phosphoethanolamine + (9Z)-hexadecenoyl-CoA = 1-(9Z)-octadecenoyl-2-(9Z)-hexadecenoyl-sn-glycero-3-phosphoethanolamine + CoA. The catalysed reaction is 1-(9Z-octadecenoyl)-sn-glycero-3-phosphoethanolamine + hexadecanoyl-CoA = 1-(9Z-octadecenoyl)-2-hexadecanoyl-sn-glycero-3-phosphoethanolamine + CoA. It catalyses the reaction 1-(9Z-octadecenoyl)-sn-glycero-3-phosphoethanolamine + tetradecanoyl-CoA = 1-(9Z)-octadecenoyl-2-tetradecanoyl-sn-glycero-3-phosphoethanolamine + CoA. It carries out the reaction 1-(9Z-octadecenoyl)-sn-glycero-3-phosphate + (9Z)-octadecenoyl-CoA = 1,2-di-(9Z-octadecenoyl)-sn-glycero-3-phosphate + CoA. The enzyme catalyses (9Z)-hexadecenoyl-CoA + 1-hexadecanoyl-sn-glycero-3-phosphocholine = 1-hexadecanoyl-2-(9Z-hexadecenoyl)-sn-glycero-3-phosphocholine + CoA. The catalysed reaction is 1-hexadecanoyl-sn-glycero-3-phosphocholine + (9Z)-octadecenoyl-CoA = 1-hexadecanoyl-2-(9Z-octadecenoyl)-sn-glycero-3-phosphocholine + CoA. It catalyses the reaction 1-tetradecanoyl-sn-glycero-3-phosphoethanolamine + (9Z)-octadecenoyl-CoA = 1-tetradecanoyl-2-(9Z-octadecenoyl)-sn-glycero-3-phosphoethanolamine + CoA. It carries out the reaction 1-(9Z-octadecenoyl)-sn-glycero-3-phospho-L-serine + (9Z)-octadecenoyl-CoA = 1,2-di-(9Z)-octadecenoyl-sn-glycero-3-phospho-L-serine + CoA. The enzyme catalyses a 1-acyl-sn-glycero-3-phospho-(1D-myo-inositol) + (9Z)-octadecenoyl-CoA = a 1-acyl-2-(9Z-octadecenoyl)-sn-glycero-3-phospho-(1D-myo-inositol) + CoA. It functions in the pathway lipid metabolism; phospholipid metabolism. Its function is as follows. Broad specificity membrane-bound O-acyltransferase that mediates the incorporation of unsaturated acyl chains into the sn-2 position of various lysophospholipids. Preferentially acylates lysophosphocholine (LPC), but also lysophosphoethanolamine (LPE), lysophosphatidylglycerol (LPG), lysophosphatidic acid (LPA), lysophosphoethanolamine (LPE), lysophosphoinositol (LPI), and lysophosphoserine (LPS). Prefers an acyl residue to an alkyl residue at the sn-1 position of lysophospholipid acceptors. Accepts acyl chains in acyl-CoA from C-2 to C-20, and shows strong preference for unsaturated acyl-CoAs with 16-20 carbons. Together with SLC1, plays a central role in phosphatidic acid (PA) biosynthesis. PA is the intermediate, from which all glycerophospholipids are synthesized. Can also introduce an acyl chain at the sn-1 position of the lysophosphatidylcholine analog 1-hydroxy-2-hexadecyl-sn-glycero-3-phosphocholine (HHPC). The protein is Lysophospholipid acyltransferase of Saccharomyces cerevisiae (strain ATCC 204508 / S288c) (Baker's yeast).